The primary structure comprises 89 residues: Small ribosomal subunit protein uS15 (89 aa).

Belongs to the universal ribosomal protein uS15 family. In terms of assembly, part of the 30S ribosomal subunit. Forms a bridge to the 50S subunit in the 70S ribosome, contacting the 23S rRNA.

Functionally, one of the primary rRNA binding proteins, it binds directly to 16S rRNA where it helps nucleate assembly of the platform of the 30S subunit by binding and bridging several RNA helices of the 16S rRNA. In terms of biological role, forms an intersubunit bridge (bridge B4) with the 23S rRNA of the 50S subunit in the ribosome. The protein is Small ribosomal subunit protein uS15 of Lactobacillus gasseri (strain ATCC 33323 / DSM 20243 / BCRC 14619 / CIP 102991 / JCM 1131 / KCTC 3163 / NCIMB 11718 / NCTC 13722 / AM63).